The primary structure comprises 133 residues: Snaclec A9 (133 aa).

3 disulfide bridges follow: Cys-4/Cys-15, Cys-32/Cys-131, and Cys-106/Cys-123. A C-type lectin domain is found at 11 to 132 (YEGHCYKVFN…CGQPYRFTCE (122 aa)).

It belongs to the snaclec family. As to quaternary structure, heterodimer; disulfide-linked. In terms of tissue distribution, expressed by the venom gland.

It localises to the secreted. Functionally, interferes with one step of hemostasis (modulation of platelet aggregation, or coagulation cascade, for example). This chain is Snaclec A9, found in Macrovipera lebetinus (Levantine viper).